A 141-amino-acid polypeptide reads, in one-letter code: Large ribosomal subunit protein uL16 (141 aa).

The protein belongs to the universal ribosomal protein uL16 family. Part of the 50S ribosomal subunit.

Functionally, binds 23S rRNA and is also seen to make contacts with the A and possibly P site tRNAs. In Sulfurimonas denitrificans (strain ATCC 33889 / DSM 1251) (Thiomicrospira denitrificans (strain ATCC 33889 / DSM 1251)), this protein is Large ribosomal subunit protein uL16.